The primary structure comprises 212 residues: Large ribosomal subunit protein uL3 (212 aa).

At glutamine 153 the chain carries N5-methylglutamine.

Belongs to the universal ribosomal protein uL3 family. In terms of assembly, part of the 50S ribosomal subunit. Forms a cluster with proteins L14 and L19. In terms of processing, methylated by PrmB.

One of the primary rRNA binding proteins, it binds directly near the 3'-end of the 23S rRNA, where it nucleates assembly of the 50S subunit. The protein is Large ribosomal subunit protein uL3 of Shewanella halifaxensis (strain HAW-EB4).